Reading from the N-terminus, the 101-residue chain is MKLFYLLVICALSLAVMADEKPKLILPTPAPPNLPQLVGGGGGNRKDGFGVSVDAHQKVWTSDNGRHSIGVTPGYSQHLGGPYGNSRPDYRIGAGYSYNFG.

The N-terminal stretch at 1–18 (MKLFYLLVICALSLAVMA) is a signal peptide. O-linked (GalNAc...) threonine glycans are attached at residues threonine 28 and threonine 72. Phenylalanine 100 is subject to Phenylalanine amide.

It belongs to the attacin/sarcotoxin-2 family.

Its function is as follows. Has activity against E.coli. In Protophormia terraenovae (Northern blowfly), this protein is Diptericin-D.